A 272-amino-acid chain; its full sequence is Shikimate dehydrogenase (NADP(+)) (272 aa).

Shikimate contacts are provided by residues 14-16 (SKS) and Thr-61. Lys-65 acts as the Proton acceptor in catalysis. Glu-77 is an NADP(+) binding site. Asn-86 and Asp-102 together coordinate shikimate. Residues 126 to 130 (GAGGA), 149 to 154 (NRTADK), and Met-212 contribute to the NADP(+) site. Tyr-214 is a binding site for shikimate. Gly-237 serves as a coordination point for NADP(+).

Belongs to the shikimate dehydrogenase family. As to quaternary structure, homodimer.

It catalyses the reaction shikimate + NADP(+) = 3-dehydroshikimate + NADPH + H(+). Its pathway is metabolic intermediate biosynthesis; chorismate biosynthesis; chorismate from D-erythrose 4-phosphate and phosphoenolpyruvate: step 4/7. Its function is as follows. Involved in the biosynthesis of the chorismate, which leads to the biosynthesis of aromatic amino acids. Catalyzes the reversible NADPH linked reduction of 3-dehydroshikimate (DHSA) to yield shikimate (SA). In Glaesserella parasuis serovar 5 (strain SH0165) (Haemophilus parasuis), this protein is Shikimate dehydrogenase (NADP(+)).